The following is a 61-amino-acid chain: Protein DDR2 (61 aa).

Residues 1–22 form the signal peptide; it reads MKVSQVFISAISVFGLATSVNA. Residues Asn24 and Asn27 are each glycosylated (N-linked (GlcNAc...) asparagine).

It to yeast HOR7.

Its function is as follows. May play an important role in the response of cells to diverse environmental stresses. This Saccharomyces cerevisiae (strain ATCC 204508 / S288c) (Baker's yeast) protein is Protein DDR2 (DDR2).